A 519-amino-acid chain; its full sequence is Aldehyde dehydrogenase X, mitochondrial (519 aa).

The N-terminal 19 residues, 1–19, are a transit peptide targeting the mitochondrion; sequence MLNARFLVPRLLCLQGRTT. Lys53 carries the post-translational modification N6-acetyllysine. Lys54 bears the N6-acetyllysine; alternate mark. Position 54 is an N6-succinyllysine; alternate (Lys54). 264–269 lines the NAD(+) pocket; it reads GSTEVG. Residue Glu287 is the Proton acceptor of the active site. Residue Cys321 is the Nucleophile of the active site. Lys366, Lys385, Lys401, and Lys428 each carry N6-acetyllysine; alternate. N6-succinyllysine; alternate is present on residues Lys366, Lys385, Lys401, and Lys428. Position 431 is an N6-acetyllysine (Lys431).

This sequence belongs to the aldehyde dehydrogenase family. In terms of assembly, homotetramer.

Its subcellular location is the mitochondrion matrix. The enzyme catalyses an aldehyde + NAD(+) + H2O = a carboxylate + NADH + 2 H(+). It functions in the pathway alcohol metabolism; ethanol degradation; acetate from ethanol: step 2/2. In terms of biological role, ALDHs play a major role in the detoxification of alcohol-derived acetaldehyde. They are involved in the metabolism of corticosteroids, biogenic amines, neurotransmitters, and lipid peroxidation. This Rattus norvegicus (Rat) protein is Aldehyde dehydrogenase X, mitochondrial (Aldh1b1).